The chain runs to 749 residues: Replication restart protein PriA (749 aa).

Positions 224 to 391 constitute a Helicase ATP-binding domain; sequence SLKTSQFHTH…LSGKYVLSRL (168 aa). Residue 237 to 244 participates in ATP binding; it reads GITGSGKT. Residues 333 to 336 carry the DEAH box motif; sequence DEEH. Positions 454, 457, 463, 466, 481, 484, 495, and 498 each coordinate Zn(2+). The 169-residue stretch at 490-658 folds into the Helicase C-terminal domain; sequence DLPQSCPKCL…EYPPFIRLIR (169 aa).

The protein belongs to the helicase family. PriA subfamily. In terms of assembly, component of the replication restart primosome. The cofactor is Zn(2+).

The enzyme catalyses Couples ATP hydrolysis with the unwinding of duplex DNA by translocating in the 3'-5' direction.. It carries out the reaction ATP + H2O = ADP + phosphate + H(+). Its function is as follows. Initiates the restart of stalled replication forks, which reloads the replicative helicase on sites other than the origin of replication. Recognizes and binds to abandoned replication forks and remodels them to uncover a helicase loading site. Promotes assembly of the primosome at these replication forks. The chain is Replication restart protein PriA from Chlamydia pneumoniae (Chlamydophila pneumoniae).